Consider the following 563-residue polypeptide: Proline--tRNA ligase (563 aa).

It belongs to the class-II aminoacyl-tRNA synthetase family. ProS type 1 subfamily. As to quaternary structure, homodimer.

It localises to the cytoplasm. The catalysed reaction is tRNA(Pro) + L-proline + ATP = L-prolyl-tRNA(Pro) + AMP + diphosphate. Functionally, catalyzes the attachment of proline to tRNA(Pro) in a two-step reaction: proline is first activated by ATP to form Pro-AMP and then transferred to the acceptor end of tRNA(Pro). As ProRS can inadvertently accommodate and process non-cognate amino acids such as alanine and cysteine, to avoid such errors it has two additional distinct editing activities against alanine. One activity is designated as 'pretransfer' editing and involves the tRNA(Pro)-independent hydrolysis of activated Ala-AMP. The other activity is designated 'posttransfer' editing and involves deacylation of mischarged Ala-tRNA(Pro). The misacylated Cys-tRNA(Pro) is not edited by ProRS. This chain is Proline--tRNA ligase, found in Persephonella marina (strain DSM 14350 / EX-H1).